Here is an 86-residue protein sequence, read N- to C-terminus: Large ribosomal subunit protein bL27 (86 aa).

This sequence belongs to the bacterial ribosomal protein bL27 family.

The chain is Large ribosomal subunit protein bL27 from Flavobacterium psychrophilum (strain ATCC 49511 / DSM 21280 / CIP 103535 / JIP02/86).